The primary structure comprises 595 residues: Potassium-transporting ATPase potassium-binding subunit (595 aa).

10 helical membrane passes run 9–29 (ICGYLGVLLALAKPLGSYMAA), 63–83 (TGYASAFLVFNLLGVLAVYAL), 135–155 (GLTVQNFVSAASGMAVLVALI), 177–197 (ILHILLPLSFLLALLLIGQGV), 285–305 (FLEMLAILVISGALCHTFGVM), 312–332 (GWVILAAMTLIFVPLLFVTVL), 412–432 (GLYGMLVFAIVAVFVAGLMIG), 451–471 (AIVILVPPLMVLGGTAVAVML), 516–536 (LMLGLAMWFSRYWLAVPVLAI), and 560–580 (FVGLLVGVVIIVGALTFIPAL).

The protein belongs to the KdpA family. The system is composed of three essential subunits: KdpA, KdpB and KdpC.

Its subcellular location is the cell inner membrane. Functionally, part of the high-affinity ATP-driven potassium transport (or Kdp) system, which catalyzes the hydrolysis of ATP coupled with the electrogenic transport of potassium into the cytoplasm. This subunit binds the periplasmic potassium ions and delivers the ions to the membrane domain of KdpB through an intramembrane tunnel. This Methylococcus capsulatus (strain ATCC 33009 / NCIMB 11132 / Bath) protein is Potassium-transporting ATPase potassium-binding subunit.